A 484-amino-acid polypeptide reads, in one-letter code: Glutamate--tRNA ligase (484 aa).

The 'HIGH' region signature appears at 11 to 21; it reads PSPTGLLHIGN. Residues 255 to 259 carry the 'KMSKS' region motif; the sequence is KLSKR. An ATP-binding site is contributed by K258.

This sequence belongs to the class-I aminoacyl-tRNA synthetase family. Glutamate--tRNA ligase type 1 subfamily. In terms of assembly, monomer.

It localises to the cytoplasm. The enzyme catalyses tRNA(Glu) + L-glutamate + ATP = L-glutamyl-tRNA(Glu) + AMP + diphosphate. Its function is as follows. Catalyzes the attachment of glutamate to tRNA(Glu) in a two-step reaction: glutamate is first activated by ATP to form Glu-AMP and then transferred to the acceptor end of tRNA(Glu). This Streptococcus thermophilus (strain CNRZ 1066) protein is Glutamate--tRNA ligase.